The chain runs to 124 residues: Large ribosomal subunit protein uL18 (124 aa).

It belongs to the universal ribosomal protein uL18 family. As to quaternary structure, part of the 50S ribosomal subunit; part of the 5S rRNA/L5/L18/L25 subcomplex. Contacts the 5S and 23S rRNAs.

In terms of biological role, this is one of the proteins that bind and probably mediate the attachment of the 5S RNA into the large ribosomal subunit, where it forms part of the central protuberance. This Frankia casuarinae (strain DSM 45818 / CECT 9043 / HFP020203 / CcI3) protein is Large ribosomal subunit protein uL18.